A 469-amino-acid chain; its full sequence is SHC-transforming protein 1 (469 aa).

Positions 1–26 (MNKLSGGGGRRTRVEGGQLGGEEWTR) are disordered. Serine 29 is subject to Phosphoserine. Position 44 is an N6-acetyllysine (lysine 44). Positions 46–229 (MGPGVSYLVR…AGFDGSAWDE (184 aa)) constitute a PID domain. The CH1 stretch occupies residues 230-373 (EEEELPDHQY…SMAEQLQGES (144 aa)). Phosphotyrosine is present on residues tyrosine 239, tyrosine 240, and tyrosine 313. The tract at residues 322-344 (ARQAGGGAGPPNPSVNGSAPRDL) is disordered. A Phosphoserine modification is found at serine 339. The SH2 domain occupies 374 to 465 (WFHGKLSRRE…GSELCLQQPV (92 aa)).

In terms of assembly, interacts with CPNE3; this interaction may mediate the binding of CPNE3 with ERBB2. Interacts with the NPXY motif of tyrosine-phosphorylated IGF1R and INSR in vitro via the PID domain. Once activated, binds to GRB2. Interacts with tyrosine-phosphorylated CD3T and DDR2. Interacts with the N-terminal region of APS. Interacts with phosphorylated LRP1 and IRS4. Interacts with INPP5D/SHIP1 and INPPL1/SHIP2. Interacts with ALK, GAB2, GRB7 and KIT. Interacts with PTPN6/SHP (tyrosine phosphorylated). Identified in a complex containing FGFR4, NCAM1, CDH2, PLCG1, FRS2A, SRC, SHC1, GAP43 and CTTN. Interacts with EPHB1 and GRB2; activates the MAPK/ERK cascade to regulate cell migration. Interacts with PDGFRB (tyrosine-phosphorylated). Interacts with ERBB4. Interacts with TEK/TIE2 (tyrosine-phosphorylated). Interacts with PTK2/FAK1. Interacts with FLT4 (tyrosine-phosphorylated). Interacts with the Trk receptors NTRK1, NTRK2 and NTRK3; in a phosphotyrosine-dependent manner. Interacts with CEACAM1; this interaction is CEACAM1-phosphorylation-dependent and mediates interaction with EGFR or INSR resulting in decrease coupling of SHC1 to the MAPK3/ERK1-MAPK1/ERK2 pathway. Interacts (via PID domain) with PEAK1 (when phosphorylated). Found in a complex with PPP1CA, PPP1CC, SHC1 and PEAK1. In terms of processing, phosphorylated by activated epidermal growth factor receptor. Phosphorylated in response to KIT signaling. Tyrosine phosphorylated in response to FLT3 signaling and by ligand-activated ALK. Tyrosine phosphorylated by TEK/TIE2. Tyrosine phosphorylated by ligand-activated PDGFRB. May be tyrosine phosphorylated by activated PTK2/FAK1. Dephosphorylation by PTPN2 may regulate interaction with GRB2. Phosphorylated in response to FLT4 signaling. Tyrosine phosphorylated by activated PTK2B/PYK2.

It localises to the cytoplasm. The protein resides in the cell junction. Its subcellular location is the focal adhesion. Signaling adapter that couples activated growth factor receptors to signaling pathways. Participates in a signaling cascade initiated by activated KIT and KITLG/SCF. Participates in signaling downstream of the angiopoietin receptor TEK/TIE2, and plays a role in the regulation of endothelial cell migration and sprouting angiogenesis. The chain is SHC-transforming protein 1 (Shc1) from Rattus norvegicus (Rat).